Reading from the N-terminus, the 153-residue chain is Ribosome maturation factor RimP (153 aa).

Belongs to the RimP family.

The protein resides in the cytoplasm. In terms of biological role, required for maturation of 30S ribosomal subunits. In Coxiella burnetii (strain Dugway 5J108-111), this protein is Ribosome maturation factor RimP.